We begin with the raw amino-acid sequence, 117 residues long: Histone H1-like protein HC1 (117 aa).

Residues 57–117 (EKSGLMTRKP…KSSKSRYLRK (61 aa)) form a disordered region. Residues 66–81 (PATKAKKAAATKKAAP) show a composition bias toward basic residues. The segment covering 82 to 94 (KPKIQAKAAPKAK) has biased composition (low complexity). The segment covering 95 to 117 (ATTKKTPAKAKAKKSSKSRYLRK) has biased composition (basic residues).

The protein belongs to the histone H1/H5 family. HCT subfamily.

Its function is as follows. Might have a role analogous to that of eukaryotic histone proteins. The polypeptide is Histone H1-like protein HC1 (hctA) (Chlamydia psittaci (Chlamydophila psittaci)).